The primary structure comprises 84 residues: uncharacterized protein (84 aa).

The chain crosses the membrane as a helical span at residues 13-35 (TTLVLTIISTTTTTLFAIIQLYL). A coiled-coil region spans residues 41 to 84 (LKDAVKEIVNSELSNLKTEIEELKIKQDELSRQVEEIKRKLDQK).

The protein resides in the host membrane. This is an uncharacterized protein from Sulfolobus islandicus rod-shaped virus 1 (SIRV-1).